The sequence spans 309 residues: Ras-like protein 1 (309 aa).

Residues 20–25 (GVGKSA), 36–42 (VDEYDPT), 66–67 (AG), 123–126 (NKLD), and 153–155 (SAK) each bind GTP. An Effector region motif is present at residues 39-47 (YDPTIEDSY). A disordered region spans residues 177-303 (KYNSMNRQLD…SANARKESSG (127 aa)). Composition is skewed to polar residues over residues 179–188 (NSMNRQLDNT) and 209–235 (NGSY…NHNG). Residues 236 to 245 (ETTKRTDEKN) are compositionally biased toward basic and acidic residues. The span at 246 to 256 (YVNQNNNNEGN) shows a compositional bias: low complexity. Polar residues predominate over residues 257 to 296 (TKYSSNGNGNRSDISRGNQNNALNSRSKQSAEPQKNSSAN). Cysteine 305 carries the S-palmitoyl cysteine lipid modification. Residue cysteine 306 is modified to Cysteine methyl ester. A lipid anchor (S-farnesyl cysteine) is attached at cysteine 306. A propeptide spans 307–309 (IIC) (removed in mature form).

Belongs to the small GTPase superfamily. Ras family. Post-translationally, farnesylated by RAM1-RAM2, which is required for targeting RAS1 to the cytoplasmic site of the endoplasmic reticulum, where proteolytic processing of the C-terminus by RCE1 and methylation of the resulting carboxyl group by STE14 occurs. In terms of processing, palmitoylated by the ERF2-SHR5 complex, which is required for proper plasma membrane localization of RAS1.

Its subcellular location is the cell membrane. It catalyses the reaction GTP + H2O = GDP + phosphate + H(+). Alternates between an inactive form bound to GDP and an active form bound to GTP. Activated by guanine nucleotide-exchange factor (GEF) CDC25 and inactivated by GTPase-activating proteins (GAPs) IRA1 and IRA2. The S.cerevisiae Ras proteins modulate the activity of the adenylate cyclase catalytic subunit and therefore affect the biosynthesis of cyclic-AMP. The sequence is that of Ras-like protein 1 (RAS1) from Saccharomyces cerevisiae (strain ATCC 204508 / S288c) (Baker's yeast).